The sequence spans 496 residues: Ribose import ATP-binding protein RbsA (496 aa).

ABC transporter domains are found at residues Leu-5–Glu-241 and Ser-252–Glu-496. ATP is bound at residue Gly-37 to Ser-44.

This sequence belongs to the ABC transporter superfamily. Ribose importer (TC 3.A.1.2.1) family. In terms of assembly, the complex is composed of an ATP-binding protein (RbsA), two transmembrane proteins (RbsC) and a solute-binding protein (RbsB).

The protein localises to the cell membrane. It catalyses the reaction D-ribose(out) + ATP + H2O = D-ribose(in) + ADP + phosphate + H(+). In terms of biological role, part of the ABC transporter complex RbsABC involved in ribose import. Responsible for energy coupling to the transport system. This is Ribose import ATP-binding protein RbsA from Caldanaerobacter subterraneus subsp. tengcongensis (strain DSM 15242 / JCM 11007 / NBRC 100824 / MB4) (Thermoanaerobacter tengcongensis).